Reading from the N-terminus, the 32-residue chain is CSNLSTCVLSAYWRNLNNFHRFSGMGFGPETP.

A disulfide bridge connects residues Cys1 and Cys7. Residue Pro32 is modified to Proline amide.

It belongs to the calcitonin family.

The protein resides in the secreted. Calcitonin is a peptide hormone that causes a rapid but short-lived drop in the level of calcium and phosphate in blood by promoting the incorporation of those ions in the bones. Calcitonin function is mediated by the calcitonin receptor/CALCR and the CALCR-RAMP2 (AMYR2) receptor complex. This Sus scrofa (Pig) protein is Calcitonin (CALCA).